The sequence spans 439 residues: Hydrogenobyrinate a,c-diamide synthase (439 aa).

Residues 247–439 enclose the GATase cobBQ-type domain; the sequence is RIALAEDGAF…FFHAIARASA (193 aa). The Nucleophile role is filled by cysteine 329.

It belongs to the CobB/CbiA family. The cofactor is Mg(2+).

It catalyses the reaction hydrogenobyrinate + 2 L-glutamine + 2 ATP + 2 H2O = hydrogenobyrinate a,c-diamide + 2 L-glutamate + 2 ADP + 2 phosphate + 2 H(+). Its pathway is cofactor biosynthesis; adenosylcobalamin biosynthesis; cob(II)yrinate a,c-diamide from precorrin-2 (aerobic route): step 9/10. Catalyzes the ATP-dependent amidation of the two carboxylate groups at positions a and c of hydrogenobyrinate, using either L-glutamine or ammonia as the nitrogen source. The chain is Hydrogenobyrinate a,c-diamide synthase from Mesorhizobium japonicum (strain LMG 29417 / CECT 9101 / MAFF 303099) (Mesorhizobium loti (strain MAFF 303099)).